The following is a 563-amino-acid chain: ATP-dependent RNA helicase DeaD (563 aa).

Residues 13 to 41 (ATFADLQIHPRVLRAIGDVGYESPTAIQA) carry the Q motif motif. The region spanning 44 to 215 (IPALMAGSDV…AKYLHDPFEV (172 aa)) is the Helicase ATP-binding domain. 57 to 64 (AQTGTGKT) provides a ligand contact to ATP. The short motif at 163–166 (DEAD) is the DEAD box element. The Helicase C-terminal domain maps to 226–385 (NISQSYIQVA…AQLPTVEDVN (160 aa)). 2 disordered regions span residues 441–470 (LMAP…PDLT) and 543–563 (YRPP…KHVG). Basic and acidic residues predominate over residues 451-461 (RNRDQRRDRPQ). The segment covering 551–563 (RHNGGKPRRKHVG) has biased composition (basic residues).

It belongs to the DEAD box helicase family. DeaD/CsdA subfamily.

The protein localises to the cytoplasm. The catalysed reaction is ATP + H2O = ADP + phosphate + H(+). DEAD-box RNA helicase involved in various cellular processes at low temperature, including ribosome biogenesis, mRNA degradation and translation initiation. The polypeptide is ATP-dependent RNA helicase DeaD (Mycobacterium tuberculosis (strain CDC 1551 / Oshkosh)).